A 757-amino-acid polypeptide reads, in one-letter code: Probable tRNA (uracil-O(2)-)-methyltransferase (757 aa).

Disordered stretches follow at residues 55–93 (EARGPGTSAGSEQKERGPGPGQGSPGGGPGPRSLSGPEQ) and 108–138 (QQEEAQREAASVPLRDSGHPGHAEGREGDFP). Gly residues predominate over residues 72–84 (PGPGQGSPGGGPG). Phosphoserine is present on S78. Over residues 123–136 (DSGHPGHAEGREGD) the composition is skewed to basic and acidic residues. A Phosphoserine modification is found at S533. A C3H1-type zinc finger spans residues 713 to 743 (ACKTRLCWFFMHHPDGCALSTDCCPFAHGPA).

It belongs to the TRM44 family.

The protein resides in the cytoplasm. The enzyme catalyses uridine(44) in tRNA(Ser) + S-adenosyl-L-methionine = 2'-O-methyluridine(44) in tRNA(Ser) + S-adenosyl-L-homocysteine + H(+). Its function is as follows. Probable adenosyl-L-methionine (AdoMet)-dependent tRNA (uracil-O(2)-)-methyltransferase. The polypeptide is Probable tRNA (uracil-O(2)-)-methyltransferase (TRMT44) (Homo sapiens (Human)).